A 583-amino-acid chain; its full sequence is CD166 antigen (583 aa).

An N-terminal signal peptide occupies residues 1 to 27 (MASKAAPSCRLVFCLLISATVLRPGLG). 2 consecutive Ig-like V-type domains span residues 28 to 120 (WYTV…TEDD) and 125 to 234 (PTVV…KTVY). At 28 to 527 (WYTVNSAYGD…NKEKVNDQAK (500 aa)) the chain is on the extracellular side. 2 disulfide bridges follow: Cys-43-Cys-113 and Cys-157-Cys-220. N-linked (GlcNAc...) asparagine glycosylation is found at Asn-91, Asn-95, Asn-167, Asn-265, Asn-306, Asn-361, Asn-457, Asn-480, and Asn-499. Ig-like C2-type domains are found at residues 245–328 (PTEQ…AAIT), 333–409 (DLSL…ESLT), and 416–501 (PQIK…LNVS). 3 disulfide bridges follow: Cys-270–Cys-313, Cys-354–Cys-392, and Cys-435–Cys-485. Residues 528 to 549 (LIVGIVVGLLLAALVAGVVYWL) traverse the membrane as a helical segment. Topologically, residues 550–583 (YMKKSKTASKHVNKDLGNMEENKKLEENNHKTEA) are cytoplasmic. Positions 562–583 (NKDLGNMEENKKLEENNHKTEA) are disordered. Residues 569–583 (EENKKLEENNHKTEA) show a composition bias toward basic and acidic residues.

In terms of assembly, homodimer. Interacts (via extracellular domain) with CD6 (via extracellular domain). Homodimerization and interaction with CD6 involve the same region and cannot occur simultaneously. The affinity for CD6 is much higher than the affinity for self-association. Interacts (via glycosylated extracellular domain) with LGALS1 and LGALS3. Interaction with LGALS1 or LGALS3 inhibits interaction with CD6. In terms of processing, glycosylated. As to expression, constitutively expressed in the autonomic nervous system. Sympathetic and parasympathetic nerve fibers but not myelinated nerve fibers in the spinal nerve.

It localises to the cell membrane. The protein localises to the cell projection. The protein resides in the axon. Its subcellular location is the dendrite. Its function is as follows. Cell adhesion molecule that mediates both heterotypic cell-cell contacts via its interaction with CD6, as well as homotypic cell-cell contacts. Promotes T-cell activation and proliferation via its interactions with CD6. Contributes to the formation and maturation of the immunological synapse via its interactions with CD6. Mediates homotypic interactions with cells that express ALCAM. Mediates attachment of dendritic cells onto endothelial cells via homotypic interaction. Inhibits endothelial cell migration and promotes endothelial tube formation via homotypic interactions. Required for normal organization of the lymph vessel network. Required for normal hematopoietic stem cell engraftment in the bone marrow. Plays a role in hematopoiesis; required for normal numbers of hematopoietic stem cells in bone marrow. Promotes in vitro osteoblast proliferation and differentiation. Promotes neurite extension, axon growth and axon guidance; axons grow preferentially on surfaces that contain ALCAM. Mediates outgrowth and pathfinding for retinal ganglion cell axons. This is CD166 antigen (ALCAM) from Bos taurus (Bovine).